A 303-amino-acid chain; its full sequence is Diaminopimelate epimerase (303 aa).

A substrate-binding site is contributed by N14. Positions 60 to 74 are enriched in low complexity; sequence PVSSAGATADAAAGR. Positions 60 to 86 are disordered; it reads PVSSAGATADAAAGRPPQPSAGRPPQP. Positions 75 to 86 are enriched in pro residues; the sequence is PPQPSAGRPPQP. N97 serves as a coordination point for substrate. Catalysis depends on C106, which acts as the Proton donor. Substrate-binding positions include 107-108, N178, N209, and 227-228; these read GN and ER. The active-site Proton acceptor is the C236. 237–238 is a substrate binding site; that stretch reads GS.

The protein belongs to the diaminopimelate epimerase family. Homodimer.

Its subcellular location is the cytoplasm. It carries out the reaction (2S,6S)-2,6-diaminopimelate = meso-2,6-diaminopimelate. It functions in the pathway amino-acid biosynthesis; L-lysine biosynthesis via DAP pathway; DL-2,6-diaminopimelate from LL-2,6-diaminopimelate: step 1/1. Its function is as follows. Catalyzes the stereoinversion of LL-2,6-diaminopimelate (L,L-DAP) to meso-diaminopimelate (meso-DAP), a precursor of L-lysine and an essential component of the bacterial peptidoglycan. In Acidothermus cellulolyticus (strain ATCC 43068 / DSM 8971 / 11B), this protein is Diaminopimelate epimerase.